The sequence spans 624 residues: Chaperone protein HtpG (624 aa).

Residues 1–336 (MKTQKKEVYN…SSDLPLNISR (336 aa)) form an a; substrate-binding region. The interval 337–552 (EILQDNSITE…STEMTTQMAK (216 aa)) is b. Positions 553–624 (LFSAAGQSVP…ISRMNKLLIK (72 aa)) are c.

It belongs to the heat shock protein 90 family. Homodimer.

It localises to the cytoplasm. In terms of biological role, molecular chaperone. Has ATPase activity. In Buchnera aphidicola subsp. Acyrthosiphon pisum (strain APS) (Acyrthosiphon pisum symbiotic bacterium), this protein is Chaperone protein HtpG.